We begin with the raw amino-acid sequence, 116 residues long: Ribosome-binding factor A (116 aa).

This sequence belongs to the RbfA family. As to quaternary structure, monomer. Binds 30S ribosomal subunits, but not 50S ribosomal subunits or 70S ribosomes.

The protein resides in the cytoplasm. One of several proteins that assist in the late maturation steps of the functional core of the 30S ribosomal subunit. Associates with free 30S ribosomal subunits (but not with 30S subunits that are part of 70S ribosomes or polysomes). Required for efficient processing of 16S rRNA. May interact with the 5'-terminal helix region of 16S rRNA. This Levilactobacillus brevis (strain ATCC 367 / BCRC 12310 / CIP 105137 / JCM 1170 / LMG 11437 / NCIMB 947 / NCTC 947) (Lactobacillus brevis) protein is Ribosome-binding factor A.